The chain runs to 107 residues: Integration host factor (107 aa).

The tract at residues 1–20 (MALPPLTPEQRAAALEKAAA) is disordered. The span at 9–18 (EQRAAALEKA) shows a compositional bias: low complexity. Residue Lys-54 coordinates DNA. The H2TH motif, binds DNA motif lies at 64 to 71 (LPGVGKVR). Ser-82, Arg-85, Arg-88, Ser-92, Asn-93, and Gln-94 together coordinate DNA. Residues 82-94 (SESRRVRGLGSNQ) form a lid, binds DNA region.

The protein belongs to the actinobacterial IHF (aIHF) family. As to quaternary structure, monomer.

The protein resides in the cytoplasm. The protein localises to the spore. Its subcellular location is the nucleoid. Functionally, a nucleoid-associated protein (NAP) that probably plays a role in chromosome compactation. Contributes to development and secondary metabolism, but is dispensable for growth and viability. Binds to the promoter region of a number of genes (including itself); multiple molecules of the protein bind to the DNA simultaneously, deletion alters the expression of about 30 genes (both up- and down-regulation occurs). Plays a role in controlling viability. Binds dsDNA without any obvious sequence specificity, in a concentration and length-dependent manner. Promotes supercoiling in a topoisomerase-dependent manner (counteracts TopA plasmid relaxation). Binds DNA as a monomer, contacting 8 base pairs via the phosphate backbone; each monomer can bind 2 DNA duplexes, allowing a bridging function. Alters DNA topology, constraining negative supercoils, possibly by DNA twist. Longer dsDNA binds more than one sIHF subunit. The sequence is that of Integration host factor from Streptomyces coelicolor (strain ATCC BAA-471 / A3(2) / M145).